Here is a 546-residue protein sequence, read N- to C-terminus: Protein FAM124A (546 aa).

Disordered stretches follow at residues 1 to 37 (MDPK…SELS), 286 to 360 (FPKP…FQRS), and 488 to 546 (SSSS…EFYI). The span at 24 to 36 (SDYSHLSSTSSEL) shows a compositional bias: low complexity. Positions 286–302 (FPKPGRVHHASEKKRHS) are enriched in basic residues. Composition is skewed to polar residues over residues 304–324 (PLPS…SPLN) and 347–360 (ANST…FQRS). Low complexity predominate over residues 488 to 511 (SSSSATARAAPPAPSTSTLTDSSP).

It belongs to the FAM124 family.

This is Protein FAM124A (FAM124A) from Homo sapiens (Human).